The primary structure comprises 363 residues: UDP-3-O-acylglucosamine N-acyltransferase (363 aa).

The Proton acceptor role is filled by His266.

The protein belongs to the transferase hexapeptide repeat family. LpxD subfamily. As to quaternary structure, homotrimer.

It catalyses the reaction a UDP-3-O-[(3R)-3-hydroxyacyl]-alpha-D-glucosamine + a (3R)-hydroxyacyl-[ACP] = a UDP-2-N,3-O-bis[(3R)-3-hydroxyacyl]-alpha-D-glucosamine + holo-[ACP] + H(+). The protein operates within bacterial outer membrane biogenesis; LPS lipid A biosynthesis. Its function is as follows. Catalyzes the N-acylation of UDP-3-O-acylglucosamine using 3-hydroxyacyl-ACP as the acyl donor. Is involved in the biosynthesis of lipid A, a phosphorylated glycolipid that anchors the lipopolysaccharide to the outer membrane of the cell. The protein is UDP-3-O-acylglucosamine N-acyltransferase of Bordetella parapertussis (strain 12822 / ATCC BAA-587 / NCTC 13253).